The chain runs to 200 residues: Large ribosomal subunit protein bL25 (200 aa).

The tract at residues 1–20 (MEARELKANVRKESGKEQAR) is disordered.

The protein belongs to the bacterial ribosomal protein bL25 family. CTC subfamily. In terms of assembly, part of the 50S ribosomal subunit; part of the 5S rRNA/L5/L18/L25 subcomplex. Contacts the 5S rRNA. Binds to the 5S rRNA independently of L5 and L18.

This is one of the proteins that binds to the 5S RNA in the ribosome where it forms part of the central protuberance. This is Large ribosomal subunit protein bL25 from Syntrophus aciditrophicus (strain SB).